The following is a 572-amino-acid chain: Methionine--tRNA ligase (572 aa).

Positions 11–21 match the 'HIGH' region motif; sequence PYINGIKHLGN. Positions 143, 146, 156, and 159 each coordinate Zn(2+). Residues 346–350 carry the 'KMSKS' region motif; it reads QFSTS. Threonine 349 provides a ligand contact to ATP.

The protein belongs to the class-I aminoacyl-tRNA synthetase family. MetG type 1 subfamily. As to quaternary structure, monomer. Zn(2+) is required as a cofactor.

Its subcellular location is the cytoplasm. It catalyses the reaction tRNA(Met) + L-methionine + ATP = L-methionyl-tRNA(Met) + AMP + diphosphate. Its function is as follows. Is required not only for elongation of protein synthesis but also for the initiation of all mRNA translation through initiator tRNA(fMet) aminoacylation. The protein is Methionine--tRNA ligase of Roseobacter denitrificans (strain ATCC 33942 / OCh 114) (Erythrobacter sp. (strain OCh 114)).